A 211-amino-acid polypeptide reads, in one-letter code: ATP phosphoribosyltransferase (211 aa).

Belongs to the ATP phosphoribosyltransferase family. Short subfamily. As to quaternary structure, heteromultimer composed of HisG and HisZ subunits.

It localises to the cytoplasm. The enzyme catalyses 1-(5-phospho-beta-D-ribosyl)-ATP + diphosphate = 5-phospho-alpha-D-ribose 1-diphosphate + ATP. It participates in amino-acid biosynthesis; L-histidine biosynthesis; L-histidine from 5-phospho-alpha-D-ribose 1-diphosphate: step 1/9. Catalyzes the condensation of ATP and 5-phosphoribose 1-diphosphate to form N'-(5'-phosphoribosyl)-ATP (PR-ATP). Has a crucial role in the pathway because the rate of histidine biosynthesis seems to be controlled primarily by regulation of HisG enzymatic activity. The protein is ATP phosphoribosyltransferase of Hahella chejuensis (strain KCTC 2396).